Consider the following 38-residue polypeptide: Photosystem II reaction center protein Y (38 aa).

The Lumenal segment spans residues 1–4 (MSMR). A helical transmembrane segment spans residues 5–23 (LVVVLLPLGIALGWAVYNI). Over 24–38 (GKLAIEQWRRTGSKV) the chain is Stromal.

It belongs to the PsbY family. In terms of assembly, PSII is composed of 1 copy each of membrane proteins PsbA, PsbB, PsbC, PsbD, PsbE, PsbF, PsbH, PsbI, PsbJ, PsbK, PsbL, PsbM, PsbT, PsbX, PsbY, PsbZ, Psb30/Ycf12, at least 3 peripheral proteins of the oxygen-evolving complex and a large number of cofactors. It forms dimeric complexes.

The protein resides in the plastid. Its subcellular location is the cyanelle thylakoid membrane. In terms of biological role, loosely associated component of the core of photosystem II (PSII), it is not always seen in crystals. PSII is a light-driven water plastoquinone oxidoreductase, using light energy to abstract electrons from H(2)O, generating a proton gradient subsequently used for ATP formation. The polypeptide is Photosystem II reaction center protein Y (Cyanophora paradoxa).